We begin with the raw amino-acid sequence, 572 residues long: Potassium-transporting ATPase potassium-binding subunit (572 aa).

Helical transmembrane passes span 5 to 25 (LAAG…YVPL), 71 to 91 (VGYT…LYVL), 97 to 117 (VLPL…NTAV), 142 to 162 (GLAV…VALI), 188 to 208 (ILLP…TIQS), 258 to 278 (PTPL…VCLT), 292 to 312 (LTVL…VTWA), 387 to 407 (GLYG…LLVG), 422 to 442 (ITMA…GTGI), 500 to 520 (LGMA…ALAG), and 548 to 568 (GTVL…GPIA).

This sequence belongs to the KdpA family. The system is composed of three essential subunits: KdpA, KdpB and KdpC.

The protein localises to the cell membrane. In terms of biological role, part of the high-affinity ATP-driven potassium transport (or Kdp) system, which catalyzes the hydrolysis of ATP coupled with the electrogenic transport of potassium into the cytoplasm. This subunit binds the extracellular potassium ions and delivers the ions to the membrane domain of KdpB through an intramembrane tunnel. The chain is Potassium-transporting ATPase potassium-binding subunit from Mycobacteroides abscessus (strain ATCC 19977 / DSM 44196 / CCUG 20993 / CIP 104536 / JCM 13569 / NCTC 13031 / TMC 1543 / L948) (Mycobacterium abscessus).